Here is a 286-residue protein sequence, read N- to C-terminus: Bifunctional protein FolD (286 aa).

NADP(+)-binding positions include 165-167 (GRS) and Ser190.

Belongs to the tetrahydrofolate dehydrogenase/cyclohydrolase family. Homodimer.

It catalyses the reaction (6R)-5,10-methylene-5,6,7,8-tetrahydrofolate + NADP(+) = (6R)-5,10-methenyltetrahydrofolate + NADPH. The catalysed reaction is (6R)-5,10-methenyltetrahydrofolate + H2O = (6R)-10-formyltetrahydrofolate + H(+). The protein operates within one-carbon metabolism; tetrahydrofolate interconversion. In terms of biological role, catalyzes the oxidation of 5,10-methylenetetrahydrofolate to 5,10-methenyltetrahydrofolate and then the hydrolysis of 5,10-methenyltetrahydrofolate to 10-formyltetrahydrofolate. In Paraburkholderia phytofirmans (strain DSM 17436 / LMG 22146 / PsJN) (Burkholderia phytofirmans), this protein is Bifunctional protein FolD.